A 268-amino-acid polypeptide reads, in one-letter code: Phosphatidylcholine synthase (268 aa).

Over 1–27 (MAARKAAKKLTDRIPRPKKKVTWPQAR) the chain is Cytoplasmic. A helical transmembrane segment spans residues 28 to 48 (AFSVHLLTASGSFLAFLSLVA). At 49-53 (ASEER) the chain is on the periplasmic side. A helical membrane pass occupies residues 54-74 (WTAMFWWLGLALFVDGIDGPI). The Cytoplasmic portion of the chain corresponds to 75–88 (ARKLEVKEILPTWS). Residues 89–109 (GELLDNIIDYVTYVLIPAFAL) form a helical membrane-spanning segment. Over 110–112 (YQR) the chain is Periplasmic. A helical membrane pass occupies residues 113–133 (GFMGEGLSFLSAAIIVVSSAI). The Cytoplasmic portion of the chain corresponds to 134–145 (YYADTGMKTKEN). The chain crosses the membrane as a helical span at residues 146 to 166 (FFKGFPVVWNMVVFTLFVIEP). At 167–168 (GQ) the chain is on the periplasmic side. Residues 169–189 (WVSFAVVVVAGILTFVPINFI) traverse the membrane as a helical segment. Residues 190–203 (HPVRVVRLRPFNLT) are Cytoplasmic-facing. A helical transmembrane segment spans residues 204–224 (MTLLWCAFGALALAQAALAAF). Over 225-240 (YDQIGVLGAQVSTFIK) the chain is Periplasmic. A helical membrane pass occupies residues 241 to 261 (IGITITGLYLACIGGIMQFFP). Over 262–268 (NLGAKKA) the chain is Cytoplasmic.

Belongs to the CDP-alcohol phosphatidyltransferase class-I family. The cofactor is Mn(2+).

The protein resides in the cell inner membrane. The catalysed reaction is a CDP-1,2-diacyl-sn-glycerol + choline = a 1,2-diacyl-sn-glycero-3-phosphocholine + CMP + H(+). Condenses choline with CDP-diglyceride to produce phosphatidylcholine and CMP. The sequence is that of Phosphatidylcholine synthase (pcs) from Mesorhizobium japonicum (strain LMG 29417 / CECT 9101 / MAFF 303099) (Mesorhizobium loti (strain MAFF 303099)).